A 97-amino-acid polypeptide reads, in one-letter code: Ice-structuring protein (97 aa).

Residues 1–23 (MALSLFTVGQLIFLFWTLRITEA) form the signal peptide. Residues 24 to 48 (NPDPAAKAAPAAVADPAAAAAAAVA) constitute a propeptide, removed by a dipeptidylpeptidase.

It belongs to the type-I AFP family. Detected in blood serum (at protein level).

The protein resides in the secreted. In terms of biological role, contributes to protect fish blood from freezing at subzero sea water temperatures. Lowers the blood freezing point. Binds to nascent ice crystals and prevents further growth. The polypeptide is Ice-structuring protein (Myzopsetta ferruginea (Yellowtail flounder)).